The primary structure comprises 203 residues: Fucoxanthin-chlorophyll a-c binding protein, chloroplastic (203 aa).

The transit peptide at Met-1–Met-30 directs the protein to the chloroplast.

The protein belongs to the fucoxanthin chlorophyll protein family. As to quaternary structure, the LHC complex of chromophytic algae is composed of fucoxanthin, chlorophyll A and C bound non-covalently by fucoxanthin chlorophyll proteins (FCPs). The ratio of pigments in this LHC is; fucoxanthin: chlorophyll C: chlorophyll A; (0.6-1): (0.1-0.3): (1).

Its subcellular location is the plastid. It localises to the chloroplast thylakoid membrane. Its function is as follows. The light-harvesting complex (LHC) functions as a light receptor, it captures and delivers excitation energy to photosystems with which it is closely associated. Energy is transferred from the carotenoid and chlorophyll C (or B) to chlorophyll A and the photosynthetic reaction centers where it is used to synthesize ATP and reducing power. The protein is Fucoxanthin-chlorophyll a-c binding protein, chloroplastic (FCPA) of Trieres chinensis (Marine centric diatom).